The chain runs to 115 residues: ATP-dependent Clp protease adapter protein ClpS (115 aa).

This sequence belongs to the ClpS family. As to quaternary structure, binds to the N-terminal domain of the chaperone ClpA.

In terms of biological role, involved in the modulation of the specificity of the ClpAP-mediated ATP-dependent protein degradation. The polypeptide is ATP-dependent Clp protease adapter protein ClpS (Leptothrix cholodnii (strain ATCC 51168 / LMG 8142 / SP-6) (Leptothrix discophora (strain SP-6))).